Reading from the N-terminus, the 503-residue chain is D-alanine--D-alanyl carrier protein ligase (503 aa).

151–152 (TS) contacts ATP. Aspartate 196 contributes to the D-alanine binding site. Residue 291-296 (NTYGPT) participates in ATP binding. Position 300 (valine 300) interacts with D-alanine. Residues aspartate 382, 393–396 (YNGR), and lysine 491 each bind ATP. A D-alanine-binding site is contributed by lysine 491.

Belongs to the ATP-dependent AMP-binding enzyme family. DltA subfamily.

Its subcellular location is the cytoplasm. It carries out the reaction holo-[D-alanyl-carrier protein] + D-alanine + ATP = D-alanyl-[D-alanyl-carrier protein] + AMP + diphosphate. It participates in cell wall biogenesis; lipoteichoic acid biosynthesis. Catalyzes the first step in the D-alanylation of lipoteichoic acid (LTA), the activation of D-alanine and its transfer onto the D-alanyl carrier protein (Dcp) DltC. In an ATP-dependent two-step reaction, forms a high energy D-alanyl-AMP intermediate, followed by transfer of the D-alanyl residue as a thiol ester to the phosphopantheinyl prosthetic group of the Dcp. D-alanylation of LTA plays an important role in modulating the properties of the cell wall in Gram-positive bacteria, influencing the net charge of the cell wall. The chain is D-alanine--D-alanyl carrier protein ligase from Bacillus anthracis (strain A0248).